The chain runs to 330 residues: Type II restriction enzyme Cfr9I (330 aa).

It belongs to the XcyI type II restriction endonuclease family. Mg(2+) serves as cofactor.

The enzyme catalyses Endonucleolytic cleavage of DNA to give specific double-stranded fragments with terminal 5'-phosphates.. An E and P subtype restriction enzyme that recognizes the double-stranded sequence 5'-CCCGGG-3' and cleaves after C-1. This Citrobacter freundii protein is Type II restriction enzyme Cfr9I (cfr9IR).